A 63-amino-acid polypeptide reads, in one-letter code: Large ribosomal subunit protein bL32 (63 aa).

The tract at residues 1-23 (MATPKAKVSKSRRDKRRAQFTAR) is disordered. Basic residues predominate over residues 7–18 (KVSKSRRDKRRA).

It belongs to the bacterial ribosomal protein bL32 family.

The chain is Large ribosomal subunit protein bL32 from Prosthecochloris aestuarii (strain DSM 271 / SK 413).